The chain runs to 359 residues: Protein RecA (359 aa).

74-81 (GPESSGKT) is an ATP binding site.

Belongs to the RecA family.

The protein localises to the cytoplasm. Its function is as follows. Can catalyze the hydrolysis of ATP in the presence of single-stranded DNA, the ATP-dependent uptake of single-stranded DNA by duplex DNA, and the ATP-dependent hybridization of homologous single-stranded DNAs. It interacts with LexA causing its activation and leading to its autocatalytic cleavage. This is Protein RecA from Anaplasma marginale (strain Florida).